The following is a 604-amino-acid chain: Vacuolar protein sorting-associated protein 64 (604 aa).

Residues 1–89 (MVELEKRRRP…SVHQVSQQQQ (89 aa)) form a disordered region. The Cytoplasmic segment spans residues 1–578 (MVELEKRRRP…LGVVEGKRTR (578 aa)). A compositionally biased stretch (polar residues) spans 22–34 (DQSNSQGMTKTPE). 2 stretches are compositionally biased toward low complexity: residues 44-57 (RARS…SRSN) and 77-89 (SPPS…QQQQ). Residues 185–257 (LKLGRPVTNS…NGTFVNGVKI (73 aa)) enclose the FHA domain. Residues 404-563 (NLINMIKTLT…EEKKDTEDTL (160 aa)) adopt a coiled-coil conformation. A disordered region spans residues 539 to 561 (INNDNNAKVKQNDSREEKKDTED). Basic and acidic residues predominate over residues 548-560 (KQNDSREEKKDTE). A helical; Anchor for type IV membrane protein transmembrane segment spans residues 579-598 (VSKGMLFGVVAISFGLVATA). Topologically, residues 599–604 (VKQLPQ) are lumenal.

Component of a complex at least composed of FAR3, FAR7, FAR8, FAR10, FAR11 and VPS64.

The protein resides in the endoplasmic reticulum membrane. In terms of biological role, participates in the control of the reentry into the cell cycle following pheromone treatment. Involved in vacuolar protein sorting. This Saccharomyces cerevisiae (strain ATCC 204508 / S288c) (Baker's yeast) protein is Vacuolar protein sorting-associated protein 64 (VPS64).